A 297-amino-acid polypeptide reads, in one-letter code: MSSGNSSLGIIVGIDDSPAAQVAVRWAARDAELRKIPLTLVHAVSPEVATWLEVPLPPGVLRWQQDHGRHLIDDALKVVEQASLRAGPPTVHSEIVPAAAVPTLVDMSKDAVLMVVGCLGSGRWPGRLLGSVSSGLLRHAHCPVVIIHDEDSVMPHPQQAPVLVGVDGSSASELATAIAFDEASRRNVDLVALHAWSDVDVSEWPGIDWPATQSMAEQVLAERLAGWQERYPNVAITRVVVRDQPARQLVQRSEEAQLVVVGSRGRGGYAGMLVGSVGETVAQLARTPVIVARESLT.

Residues G13, A43, 117-123, R127, 131-132, G165, D198, 262-268, and 276-278 contribute to the ATP site; these read GCLGSGR, SV, GSRGRGG, and SVG.

This sequence belongs to the universal stress protein A family. In terms of assembly, homodimer.

Its function is as follows. May play a role in the establishment of a persistent infection (latency) in the host. In Mycobacterium tuberculosis (strain CDC 1551 / Oshkosh), this protein is Universal stress protein MT2698.